The sequence spans 299 residues: MSEPIDLSQIAPTLKAEILAEALPYIRRYHGKTVVIKYGGNAMTEERLKQGFARDVILLKLVGINPVIVHGGGPQIDHALKKIGKAGTFIQGMRVTDEETMEVVEWVLGGEVQQDIVMLINHFGGHAVGLTGKDGGLIHARKLLMPDRDNPGQYIDIGQVGEVEAINPAVVKALQDDAFIPVISPIGFGEDGLSYNINADLVAGKLATVLNAEKLLMMTNIPGVMDKDGNLLTDLSAREIDALFEDGTISGGMLPKISSALDAAKSGVKSVHIVDGRIEHSVLLEILTEQPFGTMIRSH.

Substrate-binding positions include 72 to 73, R94, and N196; that span reads GG.

It belongs to the acetylglutamate kinase family. ArgB subfamily.

It is found in the cytoplasm. It catalyses the reaction N-acetyl-L-glutamate + ATP = N-acetyl-L-glutamyl 5-phosphate + ADP. It functions in the pathway amino-acid biosynthesis; L-arginine biosynthesis; N(2)-acetyl-L-ornithine from L-glutamate: step 2/4. Catalyzes the ATP-dependent phosphorylation of N-acetyl-L-glutamate. This chain is Acetylglutamate kinase, found in Burkholderia cenocepacia (strain HI2424).